Reading from the N-terminus, the 858-residue chain is Putative glutamate--cysteine ligase 2-3 (858 aa).

The carboxylate-amine ligase stretch occupies residues 1–372; the sequence is MSDARNVAVG…RDVPPAGASL (372 aa). Residues 373–858 form a unknown region; sequence GVAPAVSAPD…GSKDTWIPRR (486 aa).

In the N-terminal section; belongs to the glutamate--cysteine ligase type 2 family. YbdK subfamily.

The catalysed reaction is L-cysteine + L-glutamate + ATP = gamma-L-glutamyl-L-cysteine + ADP + phosphate + H(+). ATP-dependent carboxylate-amine ligase which exhibits weak glutamate--cysteine ligase activity. This is Putative glutamate--cysteine ligase 2-3 from Frankia alni (strain DSM 45986 / CECT 9034 / ACN14a).